A 194-amino-acid polypeptide reads, in one-letter code: Imidazoleglycerol-phosphate dehydratase (194 aa).

The protein belongs to the imidazoleglycerol-phosphate dehydratase family.

It is found in the cytoplasm. The enzyme catalyses D-erythro-1-(imidazol-4-yl)glycerol 3-phosphate = 3-(imidazol-4-yl)-2-oxopropyl phosphate + H2O. It participates in amino-acid biosynthesis; L-histidine biosynthesis; L-histidine from 5-phospho-alpha-D-ribose 1-diphosphate: step 6/9. In Listeria innocua serovar 6a (strain ATCC BAA-680 / CLIP 11262), this protein is Imidazoleglycerol-phosphate dehydratase.